Reading from the N-terminus, the 533-residue chain is Thromboxane-A synthase (533 aa).

Residues 1–10 (MEVLGLLKFE) are Cytoplasmic-facing. The helical transmembrane segment at 11-31 (VSGTIVTVTLLVALLALLKWY) threads the bilayer. At 32 to 75 (SMSAFSRLEKLGIRHPKPSPFVGNLMFFRQGFWESQLELRERYG) the chain is on the lumenal side. The chain crosses the membrane as a helical span at residues 76–96 (PLCGYYLGRRMHVVISEPDMI). Topologically, residues 97-223 (KQVLVENFSN…RRASTFCIPR (127 aa)) are cytoplasmic. A helical membrane pass occupies residues 224–244 (PLLVLILSFPSIMVPLARILP). Topologically, residues 245–335 (NKNRDELNGF…FTVDEIVGQA (91 aa)) are lumenal. Residues 336 to 356 (FLFLIAGHEVITNTLSFITYL) traverse the membrane as a helical segment. The Cytoplasmic portion of the chain corresponds to 357 to 533 (LATHPDCQER…NGVYIKIVSR (177 aa)). Position 479 (Cys-479) interacts with heme.

This sequence belongs to the cytochrome P450 family. As to quaternary structure, monomer. Requires heme as cofactor. As to expression, expressed primarily in lung, kidney, and spleen.

The protein resides in the endoplasmic reticulum membrane. The catalysed reaction is prostaglandin H2 = thromboxane A2. It carries out the reaction prostaglandin H2 = (12S)-hydroxy-(5Z,8E,10E)-heptadecatrienoate + malonaldehyde. It catalyses the reaction a hydroperoxyeicosatetraenoate = an oxoeicosatetraenoate + H2O. The enzyme catalyses (15S)-hydroperoxy-(5Z,8Z,11Z,13E)-eicosatetraenoate = 15-oxo-(5Z,8Z,11Z,13E)-eicosatetraenoate + H2O. The catalysed reaction is (15S)-hydroperoxy-(5Z,8Z,11Z,13E)-eicosatetraenoate + AH2 = (15S)-hydroxy-(5Z,8Z,11Z,13E)-eicosatetraenoate + A + H2O. In terms of biological role, catalyzes the conversion of prostaglandin H2 (PGH2) to thromboxane A2 (TXA2), a potent inducer of blood vessel constriction and platelet aggregation. Also cleaves PGH2 to 12-hydroxy-heptadecatrienoicacid (12-HHT) and malondialdehyde, which is known to act as a mediator of DNA damage. 12-HHT and malondialdehyde are formed stoichiometrically in the same amounts as TXA2. Additionally, displays dehydratase activity, toward (15S)-hydroperoxy-(5Z,8Z,11Z,13E)-eicosatetraenoate (15(S)-HPETE) producing 15-KETE and 15-HETE. The sequence is that of Thromboxane-A synthase (Tbxas1) from Mus musculus (Mouse).